The chain runs to 323 residues: Elongation factor P--(R)-beta-lysine ligase (323 aa).

Position 76–78 (76–78 (SPE)) interacts with substrate. Residues 100 to 102 (RNE) and Asn109 contribute to the ATP site. Tyr118 serves as a coordination point for substrate. 242 to 243 (EL) provides a ligand contact to ATP. A substrate-binding site is contributed by Glu249. Gly298 is a binding site for ATP.

This sequence belongs to the class-II aminoacyl-tRNA synthetase family. EpmA subfamily. As to quaternary structure, homodimer.

The enzyme catalyses D-beta-lysine + L-lysyl-[protein] + ATP = N(6)-((3R)-3,6-diaminohexanoyl)-L-lysyl-[protein] + AMP + diphosphate + H(+). In terms of biological role, with EpmB is involved in the beta-lysylation step of the post-translational modification of translation elongation factor P (EF-P). Catalyzes the ATP-dependent activation of (R)-beta-lysine produced by EpmB, forming a lysyl-adenylate, from which the beta-lysyl moiety is then transferred to the epsilon-amino group of a conserved specific lysine residue in EF-P. In Histophilus somni (strain 129Pt) (Haemophilus somnus), this protein is Elongation factor P--(R)-beta-lysine ligase.